The chain runs to 264 residues: Triosephosphate isomerase (264 aa).

12–14 (NWK) provides a ligand contact to substrate. The active-site Electrophile is the H104. E176 serves as the catalytic Proton acceptor. Residues G182, S222, and 243–244 (GG) each bind substrate.

It belongs to the triosephosphate isomerase family. Homodimer.

The protein localises to the cytoplasm. It catalyses the reaction D-glyceraldehyde 3-phosphate = dihydroxyacetone phosphate. It functions in the pathway carbohydrate biosynthesis; gluconeogenesis. Its pathway is carbohydrate degradation; glycolysis; D-glyceraldehyde 3-phosphate from glycerone phosphate: step 1/1. Functionally, involved in the gluconeogenesis. Catalyzes stereospecifically the conversion of dihydroxyacetone phosphate (DHAP) to D-glyceraldehyde-3-phosphate (G3P). The protein is Triosephosphate isomerase of Bifidobacterium adolescentis (strain ATCC 15703 / DSM 20083 / NCTC 11814 / E194a).